A 256-amino-acid polypeptide reads, in one-letter code: Pro-thyrotropin-releasing hormone (256 aa).

The signal sequence occupies residues 1–24 (MQGPWLMMALALIFVLTGIPKSCA). 2 disordered regions span residues 76-128 (RQHP…EGDS) and 151-215 (VKRQ…HPCG). Pro79, Pro111, Pro156, and Pro174 each carry proline amide. Positions 104-113 (RPHKRQHPGR) are enriched in basic residues. Positions 177–188 (RFIDPELQRSWE) are enriched in basic and acidic residues. The residue at position 205 (Pro205) is a Proline amide.

Belongs to the TRH family. Specifically expressed in hypothalamus and testis.

It is found in the secreted. Functionally, functions as a regulator of the biosynthesis of TSH in the anterior pituitary gland and as a neurotransmitter/ neuromodulator in the central and peripheral nervous systems. In Mus musculus (Mouse), this protein is Pro-thyrotropin-releasing hormone (Trh).